Here is a 1495-residue protein sequence, read N- to C-terminus: ABC transporter C family member 12 (1495 aa).

11 helical membrane-spanning segments follow: residues 38–58 (VMLV…WIIF), 76–96 (VLGL…VMGI), 110–130 (FEVA…VLIG), 146–166 (FGVL…LPLK), 173–195 (ALYL…LIYI), 303–323 (FWLA…GPVI), 337–357 (AWVG…GVLC), 420–440 (GLWS…QQLG), 441–461 (VASL…TLII), 528–548 (FILN…FVLL), and 558–578 (FTSL…PNLL). The ABC transmembrane type-1 1 domain occupies 303-583 (FWLAGIFKIG…LPNLLSQVVN (281 aa)). Residues 615-839 (ISIKNGYFSW…GILFKKLMEN (225 aa)) enclose the ABC transporter 1 domain. 650–657 (GGTGEGKT) contributes to the ATP binding site. Helical transmembrane passes span 907-927 (AVGG…TEVL), 949-969 (PGFY…VTFT), 1042-1062 (FALI…LLIL), 1140-1160 (LETL…LQNG), and 1166-1186 (AGFA…TSLL). The ABC transmembrane type-1 2 domain maps to 914–1198 (VMILLACYLA…VLRQASRAEN (285 aa)). An ABC transporter 2 domain is found at 1235–1469 (IKFEDVHLRY…DTSAFFRMVH (235 aa)). 1269 to 1276 (GRTGAGKS) lines the ATP pocket.

This sequence belongs to the ABC transporter superfamily. ABCC family. Conjugate transporter (TC 3.A.1.208) subfamily. Ubiquitous.

It localises to the membrane. The catalysed reaction is ATP + H2O + xenobioticSide 1 = ADP + phosphate + xenobioticSide 2.. Functionally, pump for glutathione S-conjugates. This chain is ABC transporter C family member 12 (ABCC12), found in Arabidopsis thaliana (Mouse-ear cress).